A 698-amino-acid chain; its full sequence is Polyribonucleotide nucleotidyltransferase (698 aa).

The Mg(2+) site is built by aspartate 488 and aspartate 494. The 60-residue stretch at 555-614 folds into the KH domain; that stretch reads PRLLTIRIDPDKIRDVIGKGGATIRALTEETGTTIDISDDGKVTIASADKAAADEARRRI. The S1 motif domain maps to 624–692; sequence GTVYEGKVSK…RQGRIRLSMK (69 aa).

The protein belongs to the polyribonucleotide nucleotidyltransferase family. In terms of assembly, component of the RNA degradosome, which is a multiprotein complex involved in RNA processing and mRNA degradation. Mg(2+) serves as cofactor.

The protein localises to the cytoplasm. It catalyses the reaction RNA(n+1) + phosphate = RNA(n) + a ribonucleoside 5'-diphosphate. Functionally, involved in mRNA degradation. Catalyzes the phosphorolysis of single-stranded polyribonucleotides processively in the 3'- to 5'-direction. The polypeptide is Polyribonucleotide nucleotidyltransferase (Alkalilimnicola ehrlichii (strain ATCC BAA-1101 / DSM 17681 / MLHE-1)).